The following is a 238-amino-acid chain: Nuclear transcription factor Y subunit B-9 (238 aa).

Residues 64 to 70 (MPIANVI) mediate DNA binding. Positions 91–102 (IQECVSEYISFV) are subunit association domain (SAD). The tract at residues 203–238 (RYYQNGSSGQDESSVGGGSSSSINGMPAFDHYGQYK) is disordered. Residues 208–227 (GSSGQDESSVGGGSSSSING) are compositionally biased toward low complexity.

It belongs to the NFYB/HAP3 subunit family. Heterotrimeric transcription factor composed of three components, NF-YA, NF-YB and NF-YC. NF-YB and NF-YC must interact and dimerize for NF-YA association and DNA binding. Interacts with PRN1. As to expression, expressed in green siliques. Present in etiolated seedlings.

The protein resides in the nucleus. Functionally, component of the NF-Y/HAP transcription factor complex. The NF-Y complex stimulates the transcription of various genes by recognizing and binding to a CCAAT motif in promoters. Acts as a central regulator of the embryogenesis. Required for the speciation of cotyledon identity and the completion of embryo maturation. Controls seed storage protein genes through the regulation of FUS3 and ABI3. Involved in the blue light (BL) and abscisic acid (ABA) signaling pathways. This chain is Nuclear transcription factor Y subunit B-9 (NFYB9), found in Arabidopsis thaliana (Mouse-ear cress).